A 261-amino-acid polypeptide reads, in one-letter code: Thiamine thiazole synthase (261 aa).

NAD(+)-binding positions include Ser-33, 52–53 (ER), Gly-60, Val-124, and 152–154 (HVD). Fe cation-binding residues include Asp-154 and His-169. Residue Met-219 participates in NAD(+) binding. Glycine is bound at residue Arg-229.

Belongs to the THI4 family. In terms of assembly, homooctamer; tetramer of dimers. Fe(2+) is required as a cofactor.

The enzyme catalyses hydrogen sulfide + glycine + NAD(+) = ADP-5-ethyl-4-methylthiazole-2-carboxylate + nicotinamide + 3 H2O + H(+). It participates in cofactor biosynthesis; thiamine diphosphate biosynthesis. Involved in the biosynthesis of the thiazole moiety of thiamine. Catalyzes the conversion of NAD and glycine to adenosine diphosphate 5-(2-hydroxyethyl)-4-methylthiazole-2-carboxylate (ADT), an adenylated thiazole intermediate, using free sulfide as a source of sulfur. This Pyrobaculum arsenaticum (strain DSM 13514 / JCM 11321 / PZ6) protein is Thiamine thiazole synthase.